Here is a 452-residue protein sequence, read N- to C-terminus: Retinoid-inducible serine carboxypeptidase (452 aa).

Residues methionine 1 to alanine 28 form the signal peptide. Residues asparagine 64, asparagine 102, and asparagine 126 are each glycosylated (N-linked (GlcNAc...) asparagine). Serine 167 is an active-site residue. N-linked (GlcNAc...) asparagine glycosylation is found at asparagine 192 and asparagine 362. Residues aspartate 371 and histidine 431 contribute to the active site.

It belongs to the peptidase S10 family. In terms of tissue distribution, highly expressed in aorta, bladder, and kidney with much lower levels in all other tissues analyzed. Expression in kidney is restricted to proximal convoluted tubules.

It is found in the secreted. Its function is as follows. May be involved in vascular wall and kidney homeostasis. In Rattus norvegicus (Rat), this protein is Retinoid-inducible serine carboxypeptidase (Scpep1).